The sequence spans 348 residues: Flagellar P-ring protein (348 aa).

The signal sequence occupies residues 1–16; sequence MRVLTIFLLFMTSIFA.

Belongs to the FlgI family. The basal body constitutes a major portion of the flagellar organelle and consists of four rings (L,P,S, and M) mounted on a central rod.

It localises to the periplasm. The protein resides in the bacterial flagellum basal body. Functionally, assembles around the rod to form the L-ring and probably protects the motor/basal body from shearing forces during rotation. In Campylobacter jejuni subsp. jejuni serotype O:23/36 (strain 81-176), this protein is Flagellar P-ring protein.